Consider the following 134-residue polypeptide: Large ribosomal subunit protein uL24 (134 aa).

Belongs to the universal ribosomal protein uL24 family. In terms of assembly, part of the 50S ribosomal subunit.

Its function is as follows. One of two assembly initiator proteins, it binds directly to the 5'-end of the 23S rRNA, where it nucleates assembly of the 50S subunit. Functionally, located at the polypeptide exit tunnel on the outside of the subunit. The chain is Large ribosomal subunit protein uL24 from Sulfolobus acidocaldarius (strain ATCC 33909 / DSM 639 / JCM 8929 / NBRC 15157 / NCIMB 11770).